The primary structure comprises 424 residues: ATP-sensitive inward rectifier potassium channel 8 (424 aa).

The Cytoplasmic portion of the chain corresponds to 1–69 (MLARKSIIPE…IFTTLVDLKW (69 aa)). Serine 6 is modified (phosphoserine). A helical membrane pass occupies residues 70 to 94 (RHTLVIFTMSFLCSWLLFAIMWWLV). Residues 95-126 (AFAHGDIYAYMEKSGMEKSGLESTVCVTNVRS) lie on the Extracellular side of the membrane. Positions 127 to 138 (FTSAFLFSIEVQ) form an intramembrane region, helical; Pore-forming. Residues 139–145 (VTIGFGG) constitute an intramembrane region (pore-forming). Positions 140 to 145 (TIGFGG) match the Selectivity filter motif. The Extracellular portion of the chain corresponds to 146–154 (RMMTEECPL). A helical transmembrane segment spans residues 155 to 176 (AITVLILQNIVGLIINAVMLGC). The Cytoplasmic segment spans residues 177–424 (IFMKTAQAHR…PEGNQNTSES (248 aa)). The tract at residues 375 to 424 (SHQNSLRKRNSMRRNNSMRRNNSIRRNNSSLMVPKVQFMTPEGNQNTSES) is disordered. The segment covering 387–404 (RRNNSMRRNNSIRRNNSS) has biased composition (low complexity).

Belongs to the inward rectifier-type potassium channel (TC 1.A.2.1) family. KCNJ8 subfamily. In terms of assembly, interacts with ABCC9. As to expression, predominantly detected in fetal and adult heart.

It localises to the membrane. It catalyses the reaction K(+)(in) = K(+)(out). Functionally, inward rectifier potassium channels are characterized by a greater tendency to allow potassium to flow into the cell rather than out of it. Their voltage dependence is regulated by the concentration of extracellular potassium; as external potassium is raised, the voltage range of the channel opening shifts to more positive voltages. The inward rectification is mainly due to the blockage of outward current by internal magnesium. This channel is activated by internal ATP and can be blocked by external barium. Can form a sulfonylurea-sensitive but ATP-insensitive potassium channel with ABCC9. In Homo sapiens (Human), this protein is ATP-sensitive inward rectifier potassium channel 8 (KCNJ8).